The sequence spans 81 residues: MNPLISAASVIAAGLAVGLASIGPGVGQGTAAGQAVEGIARQPEAEGKIRGTLLLSLAFMEALTIYGLVVALALSFANPFV.

2 consecutive transmembrane segments (helical) span residues P3–G23 and L53–A73.

This sequence belongs to the ATPase C chain family. As to quaternary structure, F-type ATPases have 2 components, F(1) - the catalytic core - and F(0) - the membrane proton channel. F(1) has five subunits: alpha(3), beta(3), gamma(1), delta(1), epsilon(1). F(0) has four main subunits: a(1), b(1), b'(1) and c(10-14). The alpha and beta chains form an alternating ring which encloses part of the gamma chain. F(1) is attached to F(0) by a central stalk formed by the gamma and epsilon chains, while a peripheral stalk is formed by the delta, b and b' chains.

It localises to the plastid. It is found in the chloroplast thylakoid membrane. Functionally, f(1)F(0) ATP synthase produces ATP from ADP in the presence of a proton or sodium gradient. F-type ATPases consist of two structural domains, F(1) containing the extramembraneous catalytic core and F(0) containing the membrane proton channel, linked together by a central stalk and a peripheral stalk. During catalysis, ATP synthesis in the catalytic domain of F(1) is coupled via a rotary mechanism of the central stalk subunits to proton translocation. Key component of the F(0) channel; it plays a direct role in translocation across the membrane. A homomeric c-ring of between 10-14 subunits forms the central stalk rotor element with the F(1) delta and epsilon subunits. The chain is ATP synthase subunit c, chloroplastic from Angiopteris evecta (Mule's foot fern).